A 610-amino-acid polypeptide reads, in one-letter code: UvrABC system protein C (610 aa).

A GIY-YIG domain is found at 16-94; that stretch reads SQPGVYRMYD…IKLYQPRYNV (79 aa). One can recognise a UVR domain in the interval 204–239; the sequence is DQVLTQLISRMETASQNLEFEEAARIRDQIQAVRRV.

It belongs to the UvrC family. Interacts with UvrB in an incision complex.

It is found in the cytoplasm. In terms of biological role, the UvrABC repair system catalyzes the recognition and processing of DNA lesions. UvrC both incises the 5' and 3' sides of the lesion. The N-terminal half is responsible for the 3' incision and the C-terminal half is responsible for the 5' incision. The polypeptide is UvrABC system protein C (Escherichia coli O139:H28 (strain E24377A / ETEC)).